Reading from the N-terminus, the 396-residue chain is Anticodon nuclease (396 aa).

Its function is as follows. Anticodon endonuclease (ACNase) that triggers the cleavage ligation of tRNA(Lys). It is activated by T4 stp protein and masked by the prrD protein (the endonuclease subunit of EcoprrI). The prr locus restricts phage T4 mutants lacking polynucleotide kinase or RNA ligase; T4 mutants lacking these genes manifest a T4-induced anticodon nuclease (ACNase). It is thought that Stp and other T4-encoded ACNase factors counteract the masking agents, thus activating the latent ACNase. The chain is Anticodon nuclease from Escherichia coli.